The sequence spans 64 residues: Alpha-conotoxin-like Ac1.1a (64 aa).

The first 21 residues, 1–21, serve as a signal peptide directing secretion; sequence MGMRMMFTLFLLVVLTTTVVS. Residues 22–47 constitute a propeptide that is removed on maturation; the sequence is YPSDSASDGRDDEAKDERSDMYELKR. Intrachain disulfides connect C51/C56 and C52/C62. At C62 the chain carries Cysteine amide.

The protein belongs to the conotoxin A superfamily. Expressed by the venom duct.

The protein resides in the secreted. Alpha-conotoxins act on postsynaptic membranes, they bind to the nicotinic acetylcholine receptors (nAChR) and thus inhibit them. The chain is Alpha-conotoxin-like Ac1.1a from Conus achatinus (Little frog cone).